The chain runs to 405 residues: 1-deoxy-D-xylulose 5-phosphate reductoisomerase (405 aa).

NADPH is bound by residues Thr-16, Gly-17, Ser-18, Ile-19, Gly-42, Arg-43, Asn-44, and Asn-130. Residue Lys-131 participates in 1-deoxy-D-xylulose 5-phosphate binding. Glu-132 provides a ligand contact to NADPH. Mn(2+) is bound at residue Asp-156. The 1-deoxy-D-xylulose 5-phosphate site is built by Ser-157, Glu-158, Ser-192, and His-215. Position 158 (Glu-158) interacts with Mn(2+). Residue Gly-221 coordinates NADPH. 1-deoxy-D-xylulose 5-phosphate-binding residues include Ser-228, Asn-233, Lys-234, and Glu-237. Residue Glu-237 coordinates Mn(2+).

The protein belongs to the DXR family. Mg(2+) is required as a cofactor. The cofactor is Mn(2+).

It carries out the reaction 2-C-methyl-D-erythritol 4-phosphate + NADP(+) = 1-deoxy-D-xylulose 5-phosphate + NADPH + H(+). It functions in the pathway isoprenoid biosynthesis; isopentenyl diphosphate biosynthesis via DXP pathway; isopentenyl diphosphate from 1-deoxy-D-xylulose 5-phosphate: step 1/6. Functionally, catalyzes the NADPH-dependent rearrangement and reduction of 1-deoxy-D-xylulose-5-phosphate (DXP) to 2-C-methyl-D-erythritol 4-phosphate (MEP). In Pasteurella multocida (strain Pm70), this protein is 1-deoxy-D-xylulose 5-phosphate reductoisomerase.